We begin with the raw amino-acid sequence, 88 residues long: Small ribosomal subunit protein bS20 (88 aa).

It belongs to the bacterial ribosomal protein bS20 family.

In terms of biological role, binds directly to 16S ribosomal RNA. The chain is Small ribosomal subunit protein bS20 from Rhodospirillum rubrum (strain ATCC 11170 / ATH 1.1.1 / DSM 467 / LMG 4362 / NCIMB 8255 / S1).